The sequence spans 177 residues: Large ribosomal subunit protein bL19 (177 aa).

Belongs to the bacterial ribosomal protein bL19 family.

Functionally, this protein is located at the 30S-50S ribosomal subunit interface and may play a role in the structure and function of the aminoacyl-tRNA binding site. This chain is Large ribosomal subunit protein bL19, found in Rhizobium meliloti (strain 1021) (Ensifer meliloti).